A 541-amino-acid polypeptide reads, in one-letter code: Chloride channel CLIC-like protein 1 (541 aa).

The first 18 residues, Met-1 to Ala-18, serve as a signal peptide directing secretion. Topologically, residues His-19–Asn-184 are lumenal. The helical transmembrane segment at Val-185–Thr-205 threads the bilayer. At Tyr-206 to Cys-217 the chain is on the cytoplasmic side. A helical membrane pass occupies residues Ile-218 to Ala-238. The Lumenal segment spans residues Gln-239–Glu-329. Residues Ile-330–Cys-350 traverse the membrane as a helical segment. Over Tyr-351–Gly-541 the chain is Cytoplasmic. The disordered stretch occupies residues His-362 to Arg-381. Over residues Arg-364–Arg-381 the composition is skewed to basic and acidic residues. Phosphoserine is present on residues Ser-434 and Ser-438. Thr-482 carries the post-translational modification Phosphothreonine. Ser-504 bears the Phosphoserine mark. Basic and acidic residues predominate over residues Gln-511–Ser-522. Residues Gln-511–Gly-541 form a disordered region.

This sequence belongs to the chloride channel MCLC family. As to quaternary structure, homomultimers. Interacts with mitochondrial protein PIGBOS1 (via C-terminus); the interaction occurs at the mitochondria-associated endoplasmic reticulum (ER) membrane, a zone of contact between the ER and mitochondrial membranes, but does not appear to play a role in ER-mitochondria tethering and is not affected by ER stress. Interacts with CALR. As to expression, expressed in testis (spermatocytes), liver and lung (at protein level). Expressed in spleen, liver, testis, kidney, heart, brain and lung.

The protein localises to the endoplasmic reticulum membrane. The catalysed reaction is chloride(in) = chloride(out). It carries out the reaction bromide(in) = bromide(out). The enzyme catalyses nitrate(in) = nitrate(out). It catalyses the reaction fluoride(in) = fluoride(out). Anion-selective channel with Ca(2+)-dependent and voltage-independent gating. Permeable to small monovalent anions with selectivity for bromide &gt; chloride &gt; nitrate &gt; fluoride. Operates in the endoplasmic reticulum (ER) membrane where it mediates chloride efflux to compensate for the loss of positive charges from the ER lumen upon Ca(2+) release. Contributes to the maintenance of ER Ca(2+) pools and activation of unfolded protein response to prevent accumulation of misfolded proteins in the ER lumen. Particularly involved in ER homeostasis mechanisms underlying motor neurons and retinal photoreceptors survival. The sequence is that of Chloride channel CLIC-like protein 1 from Rattus norvegicus (Rat).